Here is a 456-residue protein sequence, read N- to C-terminus: MLNNAMSVVILAAGKGTRMYSDLPKVLHTLAGKAMVQHVIDAANELGAAHVHLVYGHGGDLLKQALKDDNLNWVLQAEQLGTGHAMQQAAPFFADDEDILMLYGDVPLISVETLQRLRDARPQGGIGLLTVKLDDPTGYGRITRENGKVTGIVEHKDATDEQRQIQEINTGILIANGADMKRWLAKLTNNNAQGEYYITDIIALAYQEGREIVAVHPQRLSEVEGVNNRLQLSRLERVYQSEQAEKLLLAGVMLRDPARFDLRGTLTHGRDVEIDTNVIIEGNVTLGHRVKIGTGCVIKNSVIGDDCEISPYTVVEDANLAAACTIGPFARLRPGAELLEGAHVGNFVEMKKARLGKGSKAGHLTYLGDAEIGDNVNIGAGTITCNYDGANKFKTIIGDDVFVGSDTQLVAPVTVGKGATIAAGTTVTRNVGENALAISRVPQTQKEGWRRPVKKK.

The interval 1 to 229 (MLNNAMSVVI…LSEVEGVNNR (229 aa)) is pyrophosphorylase. UDP-N-acetyl-alpha-D-glucosamine is bound by residues 11-14 (LAAG), Lys-25, Gln-76, 81-82 (GT), 103-105 (YGD), Gly-140, Glu-154, Asn-169, and Asn-227. Asp-105 contacts Mg(2+). Asn-227 is a binding site for Mg(2+). Residues 230-250 (LQLSRLERVYQSEQAEKLLLA) form a linker region. The segment at 251-456 (GVMLRDPARF…EGWRRPVKKK (206 aa)) is N-acetyltransferase. UDP-N-acetyl-alpha-D-glucosamine-binding residues include Arg-333 and Lys-351. The Proton acceptor role is filled by His-363. 2 residues coordinate UDP-N-acetyl-alpha-D-glucosamine: Tyr-366 and Asn-377. Acetyl-CoA contacts are provided by residues Ala-380, 386–387 (NY), Ser-405, Ala-423, and Arg-440.

In the N-terminal section; belongs to the N-acetylglucosamine-1-phosphate uridyltransferase family. The protein in the C-terminal section; belongs to the transferase hexapeptide repeat family. In terms of assembly, homotrimer. Requires Mg(2+) as cofactor.

The protein localises to the cytoplasm. The catalysed reaction is alpha-D-glucosamine 1-phosphate + acetyl-CoA = N-acetyl-alpha-D-glucosamine 1-phosphate + CoA + H(+). The enzyme catalyses N-acetyl-alpha-D-glucosamine 1-phosphate + UTP + H(+) = UDP-N-acetyl-alpha-D-glucosamine + diphosphate. It functions in the pathway nucleotide-sugar biosynthesis; UDP-N-acetyl-alpha-D-glucosamine biosynthesis; N-acetyl-alpha-D-glucosamine 1-phosphate from alpha-D-glucosamine 6-phosphate (route II): step 2/2. The protein operates within nucleotide-sugar biosynthesis; UDP-N-acetyl-alpha-D-glucosamine biosynthesis; UDP-N-acetyl-alpha-D-glucosamine from N-acetyl-alpha-D-glucosamine 1-phosphate: step 1/1. It participates in bacterial outer membrane biogenesis; LPS lipid A biosynthesis. Catalyzes the last two sequential reactions in the de novo biosynthetic pathway for UDP-N-acetylglucosamine (UDP-GlcNAc). The C-terminal domain catalyzes the transfer of acetyl group from acetyl coenzyme A to glucosamine-1-phosphate (GlcN-1-P) to produce N-acetylglucosamine-1-phosphate (GlcNAc-1-P), which is converted into UDP-GlcNAc by the transfer of uridine 5-monophosphate (from uridine 5-triphosphate), a reaction catalyzed by the N-terminal domain. The chain is Bifunctional protein GlmU from Shigella dysenteriae serotype 1 (strain Sd197).